The sequence spans 199 residues: DNA dC-&gt;dU-editing enzyme APOBEC-3A (199 aa).

One can recognise a CMP/dCMP-type deaminase domain in the interval 27 to 143 (GRHKTYLCYE…PLYKEALQML (117 aa)). Zn(2+) is bound at residue histidine 70. The Proton donor role is filled by glutamate 72. Zn(2+)-binding residues include cysteine 101 and cysteine 106.

The protein belongs to the cytidine and deoxycytidylate deaminase family. In terms of assembly, interacts with AGO2. Interacts with TRIB3 (via N-terminus). Zn(2+) serves as cofactor. In terms of tissue distribution, expressed in peripheral leukocytes with higher expression in CD14-positive phagocytic cells. Highly expressed in keratinocytes and in periphery blood monocytes. Also detected in non-lymphoid tissues including lung and adipose tissues. Found at high levels in colorectal adenocarcinoma, Burkitt's lymphoma and chronic myelogenous leukemia.

The protein resides in the nucleus. It localises to the cytoplasm. The catalysed reaction is a 2'-deoxycytidine in single-stranded DNA + H2O + H(+) = a 2'-deoxyuridine in single-stranded DNA + NH4(+). Its function is as follows. DNA deaminase (cytidine deaminase) with restriction activity against viruses, foreign DNA and mobility of retrotransposons. Exhibits antiviral activity against adeno-associated virus (AAV) and human T-cell leukemia virus type 1 (HTLV-1) and may inhibit the mobility of LTR and non-LTR retrotransposons. Selectively targets single-stranded DNA and can deaminate both methylcytosine and cytosine in foreign DNA. Can induce somatic hypermutation in the nuclear and mitochondrial DNA. May also play a role in the epigenetic regulation of gene expression through the process of active DNA demethylation. In Homo sapiens (Human), this protein is DNA dC-&gt;dU-editing enzyme APOBEC-3A (APOBEC3A).